The chain runs to 496 residues: UDP-glycosyltransferase 73C3 (496 aa).

UDP-alpha-D-glucose is bound by residues Ser-297, 357-359 (APQ), 374-382 (HCGWNSTLE), and 396-399 (FGDQ).

It belongs to the UDP-glycosyltransferase family.

In Arabidopsis thaliana (Mouse-ear cress), this protein is UDP-glycosyltransferase 73C3 (UGT73C3).